Here is a 533-residue protein sequence, read N- to C-terminus: Protein mono-ADP-ribosyltransferase PARP3 (533 aa).

Residues 1 to 30 are disordered; that stretch reads MAPKPKPWVQTEGPEKKKGRQAGREEDPFR. K6 carries the N6-(ADP-ribosyl)lysine modification. An ADP-ribosyl glutamic acid mark is found at E12, E15, E26, and E34. Positions 14–20 match the Nuclear localization signal motif; that stretch reads PEKKKGR. The residue at position 37 (K37) is an N6-(ADP-ribosyl)lysine. The 92-residue stretch at 59-150 folds into the WGR domain; it reads GTQVYEDYNC…DHFVSHPGKY (92 aa). ADP-ribosyl aspartic acid is present on D141. E163 is modified (ADP-ribosyl glutamic acid). One can recognise a PARP alpha-helical domain in the interval 182–300; it reads PCSLDPATQK…DIELAQALQA (119 aa). ADP-ribosyl aspartic acid is present on D210. E231, E309, E310, E344, and E449 each carry ADP-ribosyl glutamic acid. A PARP catalytic domain is found at 313–533; the sequence is HPLDRDYQLL…RLRYLLEVHL (221 aa). Residues 454–482 are disordered; it reads TDNPSLKSPPPGFDSVIARGHTEPDPTQD.

This sequence belongs to the ARTD/PARP family. As to quaternary structure, interacts with PARP1; leading to activate PARP1 in absence of DNA. Interacts with PRKDC. Interacts with XRCC5/Ku80; the interaction is dependent on nucleic acids. Interacts with XRCC6/Ku70; the interaction is dependent on nucleic acids. Interacts with EZH2, HDAC1, HDAC2, SUZ12, YY1, LRIG3 and LIG4. Post-translationally, auto-mono-ADP-ribosylated. Widely expressed; the highest levels are in the kidney, skeletal muscle, liver, heart and spleen; also detected in pancreas, lung, placenta, brain, leukocytes, colon, small intestine, ovary, testis, prostate and thymus.

The protein localises to the nucleus. Its subcellular location is the chromosome. It localises to the cytoplasm. The protein resides in the cytoskeleton. It is found in the microtubule organizing center. The protein localises to the centrosome. Its subcellular location is the centriole. The enzyme catalyses L-aspartyl-[protein] + NAD(+) = 4-O-(ADP-D-ribosyl)-L-aspartyl-[protein] + nicotinamide. It catalyses the reaction L-glutamyl-[protein] + NAD(+) = 5-O-(ADP-D-ribosyl)-L-glutamyl-[protein] + nicotinamide. It carries out the reaction L-lysyl-[protein] + NAD(+) = N(6)-(ADP-D-ribosyl)-L-lysyl-[protein] + nicotinamide + H(+). With respect to regulation, mono-ADP-ribosyltransferase activity of PARP3 is selectively inhibited by ME0328 compound; ME0328 does not inhibit other ARTD/PARP enzymes, such as PARP1. Mono-ADP-ribosyltransferase is strongly inhibited by KU0058948 compound. Mono-ADP-ribosyltransferase that mediates mono-ADP-ribosylation of target proteins and plays a key role in the response to DNA damage. Mediates mono-ADP-ribosylation of glutamate, aspartate or lysine residues on target proteins. In contrast to PARP1 and PARP2, it is not able to mediate poly-ADP-ribosylation. Involved in DNA repair by mediating mono-ADP-ribosylation of a limited number of acceptor proteins involved in chromatin architecture and in DNA metabolism, such as histone H2B, XRCC5 and XRCC6. ADP-ribosylation follows DNA damage and appears as an obligatory step in a detection/signaling pathway leading to the reparation of DNA strand breaks. Involved in single-strand break repair by catalyzing mono-ADP-ribosylation of histone H2B on 'Glu-2' (H2BE2ADPr) of nucleosomes containing nicked DNA. Cooperates with the XRCC5-XRCC6 (Ku80-Ku70) heterodimer to limit end-resection thereby promoting accurate NHEJ. Suppresses G-quadruplex (G4) structures in response to DNA damage. Associates with a number of DNA repair factors and is involved in the response to exogenous and endogenous DNA strand breaks. Together with APLF, promotes the retention of the LIG4-XRCC4 complex on chromatin and accelerate DNA ligation during non-homologous end-joining (NHEJ). May link the DNA damage surveillance network to the mitotic fidelity checkpoint. Acts as a negative regulator of immunoglobulin class switch recombination, probably by controlling the level of AICDA /AID on the chromatin. In addition to proteins, also able to ADP-ribosylate DNA: mediates DNA mono-ADP-ribosylation of DNA strand break termini via covalent addition of a single ADP-ribose moiety to a 5'- or 3'-terminal phosphate residues in DNA containing multiple strand breaks. This Homo sapiens (Human) protein is Protein mono-ADP-ribosyltransferase PARP3.